The chain runs to 710 residues: Interleukin-1 receptor-associated kinase 1 (710 aa).

In terms of domain architecture, Death spans Met27–Ala106. Thr66 bears the Phosphothreonine; by PKC/PRKCI mark. Residues Pro107–Arg133 are disordered. The interval Pro110 to Asn211 is proST region. Residues Pro111–Ala123 show a composition bias toward low complexity. The residue at position 131 (Ser131) is a Phosphoserine. Glycyl lysine isopeptide (Lys-Gly) (interchain with G-Cter in ubiquitin) cross-links involve residues Lys134 and Lys180. Residues Pro169–Leu190 form a disordered region. A compositionally biased stretch (low complexity) spans Ser174 to Ser188. Thr209 carries the post-translational modification Phosphothreonine; by IRAK4. Residues Phe212–Leu521 form the Protein kinase domain. ATP is bound by residues Ile218 to Val226 and Lys239. Residue Asp340 is the Proton acceptor of the active site. Residues Lys342–Asn345 and Asp358 each bind ATP. Ser375 carries the phosphoserine modification. Position 387 is a phosphothreonine (Thr387). Disordered stretches follow at residues Trp527–Pro655 and Phe689–Ser710. The segment covering Pro537–Ser553 has biased composition (polar residues). Ser553 bears the Phosphoserine mark. Residues Ala567–Gln576 show a composition bias toward low complexity. The span at Ser616–Met639 shows a compositional bias: polar residues. Over residues Glu640–Pro654 the composition is skewed to low complexity.

This sequence belongs to the protein kinase superfamily. TKL Ser/Thr protein kinase family. Pelle subfamily. Homodimer. Forms a complex with TRAF6, PELI1, IRAK4 and MYD88. Direct binding of SMAD6 to PELI1 prevents complex formation and hence negatively regulates IL1R-TLR signaling and eventually NF-kappa-B-mediated gene expression. The TRAF6-PELI1-IRAK4-MYD88 complex recruits MAP3K7/TAK1, TAB1 and TAB2 to mediate NF-kappa-B activation. Interaction with MYD88 recruits IRAK1 to the stimulated receptor complex. Interacts with TOLLIP; this interaction occurs in the cytosol prior to receptor activation. Interacts with IL1RL1. Interacts (when polyubiquitinated) with IKBKG/NEMO. Interacts with RSAD2/viperin. Interacts with IRAK1BP1. Interacts with PELI2. Interacts with ZC3H12A; this interaction increases the interaction between ZC3H12A and IKBKB/IKKB. Interacts with IRAK4. Interacts with PELI3. Interacts with PELI1 and TRAF6. Interacts with INAVA; the interaction takes place upon PRR stimulation. Interacts (via C-terminus) with NFATC4 (via N-terminus). Mg(2+) is required as a cofactor. Following recruitment on the activated receptor complex, phosphorylated on Thr-209, probably by IRAK4, resulting in a conformational change of the kinase domain, allowing further phosphorylations to take place. Thr-387 phosphorylation in the activation loop is required to achieve full enzymatic activity. In terms of processing, polyubiquitinated by TRAF6 after cell stimulation with IL-1-beta by PELI1, PELI2 and PELI3. Polyubiquitination occurs with polyubiquitin chains linked through 'Lys-63'. Ubiquitination promotes interaction with NEMO/IKBKG. Also sumoylated; leading to nuclear translocation. As to expression, highly expressed in liver, followed by kidney and skeletal muscle.

Its subcellular location is the cytoplasm. The protein resides in the nucleus. The protein localises to the lipid droplet. It carries out the reaction L-seryl-[protein] + ATP = O-phospho-L-seryl-[protein] + ADP + H(+). The catalysed reaction is L-threonyl-[protein] + ATP = O-phospho-L-threonyl-[protein] + ADP + H(+). In terms of biological role, serine/threonine-protein kinase that plays a critical role in initiating innate immune response against foreign pathogens. Involved in Toll-like receptor (TLR) and IL-1R signaling pathways. Is rapidly recruited by MYD88 to the receptor-signaling complex upon TLR activation. Association with MYD88 leads to IRAK1 phosphorylation by IRAK4 and subsequent autophosphorylation and kinase activation. Phosphorylates E3 ubiquitin ligases Pellino proteins (PELI1, PELI2 and PELI3) to promote pellino-mediated polyubiquitination of IRAK1. Then, the ubiquitin-binding domain of IKBKG/NEMO binds to polyubiquitinated IRAK1 bringing together the IRAK1-MAP3K7/TAK1-TRAF6 complex and the NEMO-IKKA-IKKB complex. In turn, MAP3K7/TAK1 activates IKKs (CHUK/IKKA and IKBKB/IKKB) leading to NF-kappa-B nuclear translocation and activation. Alternatively, phosphorylates TIRAP to promote its ubiquitination and subsequent degradation. Phosphorylates the interferon regulatory factor 7 (IRF7) to induce its activation and translocation to the nucleus, resulting in transcriptional activation of type I IFN genes, which drive the cell in an antiviral state. When sumoylated, translocates to the nucleus and phosphorylates STAT3. The sequence is that of Interleukin-1 receptor-associated kinase 1 (Irak1) from Mus musculus (Mouse).